The chain runs to 166 residues: EAKDDLARLLRDYQDAMNVKLALDVEIATYRKLLEGEECRMSGECPSAVSISVVSSSSTTSASAGGFGGGYGGGVGVGGGARSGFGGGSGFGGGSGISGSSGFGGGSGSGFGGGSGFSGSSGFGGGSSGFGSGSGGRSGVSGGGLSSGSSRGGSVRFSQSSQRTSR.

In terms of domain architecture, IF rod spans 1–41 (EAKDDLARLLRDYQDAMNVKLALDVEIATYRKLLEGEECRM). Positions 1–41 (EAKDDLARLLRDYQDAMNVKLALDVEIATYRKLLEGEECRM) are coil 2B. Residues 42 to 166 (SGECPSAVSI…FSQSSQRTSR (125 aa)) are tail. The segment covering 122–146 (GFGGGSSGFGSGSGGRSGVSGGGLS) has biased composition (gly residues). The interval 122 to 166 (GFGGGSSGFGSGSGGRSGVSGGGLSSGSSRGGSVRFSQSSQRTSR) is disordered. The span at 147-166 (SGSSRGGSVRFSQSSQRTSR) shows a compositional bias: low complexity.

The protein belongs to the intermediate filament family. As to quaternary structure, heterotetramer of two type I and two type II keratins.

This chain is Keratin, type II cytoskeletal 68 kDa, component IB, found in Bos taurus (Bovine).